A 280-amino-acid polypeptide reads, in one-letter code: Protein FAM131C (280 aa).

Residues 195 to 280 (QDSLPSGPSQ…LWEEDEVFYN (86 aa)) form a disordered region. Over residues 197-211 (SLPSGPSQDDSLQAF) the composition is skewed to polar residues. Pro residues predominate over residues 215 to 227 (SPSPDSCPSPEEP).

The protein belongs to the FAM131 family.

This Homo sapiens (Human) protein is Protein FAM131C (FAM131C).